The primary structure comprises 470 residues: Retinoic acid receptor RXR-gamma (470 aa).

The segment at 1–145 (MHLATETAPS…NSPGALTKHI (145 aa)) is modulating. NR C4-type zinc fingers lie at residues 146 to 166 (CAIC…CEGC) and 182 to 206 (CRDS…YQKC). Residues 146 to 211 (CAICGDRSSG…RYQKCLAMGM (66 aa)) constitute a DNA-binding region (nuclear receptor). Positions 212-235 (KREAVQEERQRSREKSDTEAESTS) are hinge. The segment covering 217-229 (QEERQRSREKSDT) has biased composition (basic and acidic residues). Positions 217–242 (QEERQRSREKSDTEAESTSSTSEEMP) are disordered. In terms of domain architecture, NR LBD spans 238–466 (SEEMPVERIL…TFLMEMLETP (229 aa)).

It belongs to the nuclear hormone receptor family. NR2 subfamily. As to quaternary structure, homodimer. Heterodimer; with a rar molecule. Binds DNA preferentially as a rar/rxr heterodimer.

It localises to the nucleus. Receptor for retinoic acid. Retinoic acid receptors bind as heterodimers to their target response elements in response to their ligands, all-trans or 9-cis retinoic acid, and regulate gene expression in various biological processes. The rar/rxr heterodimers bind to the retinoic acid response elements (RARE) composed of tandem 5'-AGGTCA-3' sites known as DR1-DR5. The high affinity ligand for rxrs is 9-cis retinoic acid. This Xenopus laevis (African clawed frog) protein is Retinoic acid receptor RXR-gamma (rxrg).